The sequence spans 268 residues: NADH-quinone oxidoreductase subunit B 2 (268 aa).

[4Fe-4S] cluster contacts are provided by cysteine 42, cysteine 43, cysteine 108, and cysteine 138. Positions 237–268 are disordered; the sequence is SPNKAKGVAPEIRHNDLKRPAVEVDHARDEQR. The span at 247-268 shows a compositional bias: basic and acidic residues; sequence EIRHNDLKRPAVEVDHARDEQR.

It belongs to the complex I 20 kDa subunit family. In terms of assembly, NDH-1 is composed of 14 different subunits. Subunits NuoB, C, D, E, F, and G constitute the peripheral sector of the complex. [4Fe-4S] cluster is required as a cofactor.

The protein localises to the cell membrane. It catalyses the reaction a quinone + NADH + 5 H(+)(in) = a quinol + NAD(+) + 4 H(+)(out). Its function is as follows. NDH-1 shuttles electrons from NADH, via FMN and iron-sulfur (Fe-S) centers, to quinones in the respiratory chain. The immediate electron acceptor for the enzyme in this species is believed to be ubiquinone. Couples the redox reaction to proton translocation (for every two electrons transferred, four hydrogen ions are translocated across the cytoplasmic membrane), and thus conserves the redox energy in a proton gradient. This is NADH-quinone oxidoreductase subunit B 2 from Roseiflexus castenholzii (strain DSM 13941 / HLO8).